A 149-amino-acid chain; its full sequence is Large ribosomal subunit protein uL15 (149 aa).

Residues 14-63 (ASRKRVGRGSGSGLGCTSGKGNKGQNARAGGGVRPGFEGGQMPLQRRLPK) are disordered. Gly residues-rich tracts occupy residues 21–35 (RGSG…GKGN) and 42–52 (AGGGVRPGFEG).

The protein belongs to the universal ribosomal protein uL15 family. As to quaternary structure, part of the 50S ribosomal subunit.

Binds to the 23S rRNA. The polypeptide is Large ribosomal subunit protein uL15 (Nitratidesulfovibrio vulgaris (strain DSM 19637 / Miyazaki F) (Desulfovibrio vulgaris)).